The sequence spans 329 residues: Phenylalanine--tRNA ligase alpha subunit (329 aa).

Glu253 lines the Mg(2+) pocket.

The protein belongs to the class-II aminoacyl-tRNA synthetase family. Phe-tRNA synthetase alpha subunit type 1 subfamily. As to quaternary structure, tetramer of two alpha and two beta subunits. Mg(2+) serves as cofactor.

It localises to the cytoplasm. It catalyses the reaction tRNA(Phe) + L-phenylalanine + ATP = L-phenylalanyl-tRNA(Phe) + AMP + diphosphate + H(+). The protein is Phenylalanine--tRNA ligase alpha subunit of Coxiella burnetii (strain CbuK_Q154) (Coxiella burnetii (strain Q154)).